Reading from the N-terminus, the 178-residue chain is Protein GrpE (178 aa).

Positions 1–22 are disordered; the sequence is MSENQNPSPSPEEIEAAMSANA.

Belongs to the GrpE family. As to quaternary structure, homodimer.

It localises to the cytoplasm. Functionally, participates actively in the response to hyperosmotic and heat shock by preventing the aggregation of stress-denatured proteins, in association with DnaK and GrpE. It is the nucleotide exchange factor for DnaK and may function as a thermosensor. Unfolded proteins bind initially to DnaJ; upon interaction with the DnaJ-bound protein, DnaK hydrolyzes its bound ATP, resulting in the formation of a stable complex. GrpE releases ADP from DnaK; ATP binding to DnaK triggers the release of the substrate protein, thus completing the reaction cycle. Several rounds of ATP-dependent interactions between DnaJ, DnaK and GrpE are required for fully efficient folding. In Acidovorax ebreus (strain TPSY) (Diaphorobacter sp. (strain TPSY)), this protein is Protein GrpE.